We begin with the raw amino-acid sequence, 341 residues long: Binder of USO1 and GRH1 protein 1 (341 aa).

The tract at residues 1–181 (MSEQESDEVK…AADDLFANDG (181 aa)) is disordered. Position 2 is an N-acetylserine (Ser2). A coiled-coil region spans residues 2–41 (SEQESDEVKRMKQLEEARKRVEELKKKKNKKNKGKKNKNS). The segment covering 7-26 (DEVKRMKQLEEARKRVEELK) has biased composition (basic and acidic residues). Residues 27–39 (KKKNKKNKGKKNK) are compositionally biased toward basic residues. A compositionally biased stretch (polar residues) spans 69–78 (KANSTKSENN). A compositionally biased stretch (acidic residues) spans 79–91 (DQNDVDEESEEKE). Ser87 carries the post-translational modification Phosphoserine. A compositionally biased stretch (basic and acidic residues) spans 118 to 132 (GKDDAENTKKEEVQE). Residues 158–171 (VQTQEGNEPSNTSE) are compositionally biased toward polar residues. At Ser170 the chain carries Phosphoserine. A coiled-coil region spans residues 188 to 272 (LTTIKKQKEE…LKLAEAKAAR (85 aa)). Residue Thr292 is modified to Phosphothreonine.

Interacts with GRH1 (via C-terminus), probably forming a heterooligomer consisting of a GRH1 dimer and a BUG1 dimer.

It is found in the cytoplasm. The protein resides in the golgi apparatus. Its subcellular location is the cis-Golgi network membrane. Its function is as follows. Involved in ER to Golgi vesicle-mediated transport by either facilitating USO1-dependent and -independent tethering or increasing target accuracy of fusion events of COPII-coated vesicles. This Saccharomyces cerevisiae (strain ATCC 204508 / S288c) (Baker's yeast) protein is Binder of USO1 and GRH1 protein 1.